The primary structure comprises 406 residues: 4-hydroxy-3-methylbut-2-en-1-yl diphosphate synthase (ferredoxin) (406 aa).

Cysteine 315, cysteine 318, cysteine 349, and glutamate 356 together coordinate [4Fe-4S] cluster.

It belongs to the IspG family. Requires [4Fe-4S] cluster as cofactor.

It carries out the reaction (2E)-4-hydroxy-3-methylbut-2-enyl diphosphate + 2 oxidized [2Fe-2S]-[ferredoxin] + H2O = 2-C-methyl-D-erythritol 2,4-cyclic diphosphate + 2 reduced [2Fe-2S]-[ferredoxin] + H(+). Its pathway is isoprenoid biosynthesis; isopentenyl diphosphate biosynthesis via DXP pathway; isopentenyl diphosphate from 1-deoxy-D-xylulose 5-phosphate: step 5/6. Its function is as follows. Converts 2C-methyl-D-erythritol 2,4-cyclodiphosphate (ME-2,4cPP) into 1-hydroxy-2-methyl-2-(E)-butenyl 4-diphosphate. The protein is 4-hydroxy-3-methylbut-2-en-1-yl diphosphate synthase (ferredoxin) of Gloeothece citriformis (strain PCC 7424) (Cyanothece sp. (strain PCC 7424)).